Reading from the N-terminus, the 425-residue chain is Glutamate-1-semialdehyde 2,1-aminomutase (425 aa).

An N6-(pyridoxal phosphate)lysine modification is found at lysine 264.

Belongs to the class-III pyridoxal-phosphate-dependent aminotransferase family. HemL subfamily. Homodimer. Requires pyridoxal 5'-phosphate as cofactor.

The protein localises to the cytoplasm. The enzyme catalyses (S)-4-amino-5-oxopentanoate = 5-aminolevulinate. Its pathway is porphyrin-containing compound metabolism; protoporphyrin-IX biosynthesis; 5-aminolevulinate from L-glutamyl-tRNA(Glu): step 2/2. The sequence is that of Glutamate-1-semialdehyde 2,1-aminomutase from Leptospira biflexa serovar Patoc (strain Patoc 1 / Ames).